The sequence spans 469 residues: Asparagine--tRNA ligase (469 aa).

The protein belongs to the class-II aminoacyl-tRNA synthetase family. Homodimer.

Its subcellular location is the cytoplasm. The enzyme catalyses tRNA(Asn) + L-asparagine + ATP = L-asparaginyl-tRNA(Asn) + AMP + diphosphate + H(+). This Porphyromonas gingivalis (strain ATCC 33277 / DSM 20709 / CIP 103683 / JCM 12257 / NCTC 11834 / 2561) protein is Asparagine--tRNA ligase.